We begin with the raw amino-acid sequence, 700 residues long: Calpain-2 catalytic subunit (700 aa).

Position 2 is an N-acetylalanine (A2). The propeptide at 2–19 (AGIAAKLVKDREAAEGLG) is anchors to the small subunit. Positions 45-344 (LFQDPSFPAI…YSRLEICNLT (300 aa)) constitute a Calpain catalytic domain. Ca(2+) contacts are provided by I89, G91, and D96. Residue C105 is part of the active site. E175, Q229, and K230 together coordinate Ca(2+). Residues H262 and N286 contribute to the active site. Ca(2+)-binding residues include E292, D299, and E323. The segment at 345-514 (PDTLTSDTYK…KKADYQAVDD (170 aa)) is domain III. A linker region spans residues 515-529 (EIEANLEEFDISEDD). Positions 530–700 (IDDGFRRLFA…LISWLCFSVL (171 aa)) are domain IV. Residues A542, D545, E547, E552, D585, D587, S589, K591, E596, D615, D617, S619, T621, E626, D658, and N661 each contribute to the Ca(2+) site. 2 EF-hand domains span residues 572–605 (FSIE…TKIQ) and 602–637 (TKIQ…AGFK). The region spanning 667–700 (VRLETLFKIFKQLDPENTGTIELDLISWLCFSVL) is the EF-hand 3 domain.

Belongs to the peptidase C2 family. In terms of assembly, forms a heterodimer with a small (regulatory) subunit (CAPNS1). Interacts with CPEB3; this leads to cleavage of CPEB3. It depends on Ca(2+) as a cofactor.

It localises to the cytoplasm. Its subcellular location is the cell membrane. The enzyme catalyses Broad endopeptidase specificity.. Activated by 200-1000 micromolar concentrations of calcium and inhibited by calpastatin. In terms of biological role, calcium-regulated non-lysosomal thiol-protease which catalyzes limited proteolysis of substrates involved in cytoskeletal remodeling and signal transduction. Proteolytically cleaves MYOC at 'Arg-226'. Proteolytically cleaves CPEB3 following neuronal stimulation which abolishes CPEB3 translational repressor activity, leading to translation of CPEB3 target mRNAs. The polypeptide is Calpain-2 catalytic subunit (CAPN2) (Macaca fascicularis (Crab-eating macaque)).